A 348-amino-acid polypeptide reads, in one-letter code: Oxygen-dependent coproporphyrinogen-III oxidase (348 aa).

A substrate-binding site is contributed by Ser-104. Positions 108 and 118 each coordinate a divalent metal cation. Residue His-118 is the Proton donor of the active site. A substrate-binding site is contributed by 120 to 122; the sequence is NYR. His-152 and His-182 together coordinate a divalent metal cation. Residues 272-307 form an important for dimerization region; it reads YAEFNLVWDRGTIFGLQTNGRTESILMSLPPLARWE.

It belongs to the aerobic coproporphyrinogen-III oxidase family. As to quaternary structure, homodimer. It depends on a divalent metal cation as a cofactor.

Its subcellular location is the cytoplasm. It carries out the reaction coproporphyrinogen III + O2 + 2 H(+) = protoporphyrinogen IX + 2 CO2 + 2 H2O. Its pathway is porphyrin-containing compound metabolism; protoporphyrin-IX biosynthesis; protoporphyrinogen-IX from coproporphyrinogen-III (O2 route): step 1/1. Involved in the heme and chlorophyll biosynthesis. Catalyzes the aerobic oxidative decarboxylation of propionate groups of rings A and B of coproporphyrinogen-III to yield the vinyl groups in protoporphyrinogen-IX. The polypeptide is Oxygen-dependent coproporphyrinogen-III oxidase (Prochlorococcus marinus (strain NATL2A)).